The primary structure comprises 103 residues: Large ribosomal subunit protein bL21 (103 aa).

It belongs to the bacterial ribosomal protein bL21 family. Part of the 50S ribosomal subunit. Contacts protein L20.

In terms of biological role, this protein binds to 23S rRNA in the presence of protein L20. The sequence is that of Large ribosomal subunit protein bL21 from Laribacter hongkongensis (strain HLHK9).